The sequence spans 424 residues: Phosphoribosylamine--glycine ligase (424 aa).

One can recognise an ATP-grasp domain in the interval 111 to 312 (KAFVKECGIK…LLDLFLATAK (202 aa)). 137–189 (IQNASFPLVIKALNKNTSIVHHQEEALKILEDALKQSNEPVIIEPFLEGFELS) contacts ATP.

This sequence belongs to the GARS family.

It carries out the reaction 5-phospho-beta-D-ribosylamine + glycine + ATP = N(1)-(5-phospho-beta-D-ribosyl)glycinamide + ADP + phosphate + H(+). The protein operates within purine metabolism; IMP biosynthesis via de novo pathway; N(1)-(5-phospho-D-ribosyl)glycinamide from 5-phospho-alpha-D-ribose 1-diphosphate: step 2/2. The chain is Phosphoribosylamine--glycine ligase (purD) from Helicobacter pylori (strain J99 / ATCC 700824) (Campylobacter pylori J99).